The sequence spans 148 residues: L-alanine exporter AlaE (148 aa).

Helical transmembrane passes span 18 to 38 (FALV…ISGM), 49 to 69 (VSIP…DAFI), 88 to 108 (LLAY…SVGA), and 115 to 135 (TAVA…GYFL).

The protein belongs to the AlaE exporter family.

The protein localises to the cell inner membrane. Exports L-alanine. The sequence is that of L-alanine exporter AlaE from Yersinia enterocolitica subsp. palearctica serotype O:3 (strain DSM 13030 / CIP 106945 / Y11).